We begin with the raw amino-acid sequence, 382 residues long: Carbamoyl phosphate synthase small chain (382 aa).

Residues 1-189 (MIKSALLVLE…GLPEAKKEDE (189 aa)) are CPSase. Residues serine 47, glycine 241, and glycine 243 each contribute to the L-glutamine site. A Glutamine amidotransferase type-1 domain is found at 193–380 (HVVAYDFGAK…IALIEQYRKT (188 aa)). The Nucleophile role is filled by cysteine 269. 5 residues coordinate L-glutamine: leucine 270, glutamine 273, asparagine 311, glycine 313, and phenylalanine 314. Active-site residues include histidine 353 and glutamate 355.

Belongs to the CarA family. As to quaternary structure, composed of two chains; the small (or glutamine) chain promotes the hydrolysis of glutamine to ammonia, which is used by the large (or ammonia) chain to synthesize carbamoyl phosphate. Tetramer of heterodimers (alpha,beta)4.

It catalyses the reaction hydrogencarbonate + L-glutamine + 2 ATP + H2O = carbamoyl phosphate + L-glutamate + 2 ADP + phosphate + 2 H(+). The enzyme catalyses L-glutamine + H2O = L-glutamate + NH4(+). It participates in amino-acid biosynthesis; L-arginine biosynthesis; carbamoyl phosphate from bicarbonate: step 1/1. The protein operates within pyrimidine metabolism; UMP biosynthesis via de novo pathway; (S)-dihydroorotate from bicarbonate: step 1/3. In terms of biological role, small subunit of the glutamine-dependent carbamoyl phosphate synthetase (CPSase). CPSase catalyzes the formation of carbamoyl phosphate from the ammonia moiety of glutamine, carbonate, and phosphate donated by ATP, constituting the first step of 2 biosynthetic pathways, one leading to arginine and/or urea and the other to pyrimidine nucleotides. The small subunit (glutamine amidotransferase) binds and cleaves glutamine to supply the large subunit with the substrate ammonia. The sequence is that of Carbamoyl phosphate synthase small chain from Escherichia coli O6:H1 (strain CFT073 / ATCC 700928 / UPEC).